The following is a 337-amino-acid chain: Tert-butanol monooxygenase / tert-amyl alcohol desaturase reductase subunit (337 aa).

In terms of domain architecture, FAD-binding FR-type spans 9 to 114; sequence KYPKTALNLR…GHPRNNFPLI (106 aa). One can recognise a 2Fe-2S ferredoxin-type domain in the interval 254 to 337; the sequence is FQIKIASTGT…SKGATLVLDL (84 aa). Positions 288, 293, 296, and 324 each coordinate [2Fe-2S] cluster.

Belongs to the PDR/VanB family. As to quaternary structure, this two-component enzyme is composed of an oxygenase (MdpJ) and a reductase (MdpK). The cofactor is [2Fe-2S] cluster.

Its function is as follows. Reductase component of a two-component system involved in the degradation of tertiary alcohols such as tert-butyl alcohol (TBA) and tert-amyl alcohol (TAA). MdpK probably provides electrons via its [2Fe-2S] iron-sulfur cluster to the MdpJ oxygenase subunit. This is Tert-butanol monooxygenase / tert-amyl alcohol desaturase reductase subunit from Aquincola tertiaricarbonis.